The sequence spans 342 residues: P2Y purinoceptor 12 (342 aa).

Over 1-27 the chain is Extracellular; the sequence is MQAIDNLTSAPGNTSLCTRDYKITQVL. N-linked (GlcNAc...) asparagine glycans are attached at residues N6 and N13. 2 cysteine pairs are disulfide-bonded: C17/C270 and C97/C175. Residues 28–50 traverse the membrane as a helical segment; sequence FPLLYTVLFFVGLITNSLAMRIF. Over 51–61 the chain is Cytoplasmic; the sequence is FQIRSKSNFII. 2 positions are modified to phosphoserine: S55 and S57. A helical membrane pass occupies residues 62–82; it reads FLKNTVISDLLMILTFPFKIL. The Extracellular segment spans residues 83–97; it reads SDAKLGAGPLRTFVC. ADP-binding residues include R93, C97, and Y105. Residues 98–118 traverse the membrane as a helical segment; it reads QVTSVIFYFTMYISISFLGLI. The Cytoplasmic segment spans residues 119 to 142; sequence TIDRYQKTTRPFKTSNPKNLLGAK. The helical transmembrane segment at 143-162 threads the bilayer; that stretch reads ILSVLIWAFMFLLSLPNMIL. ADP is bound by residues 156–159, 175–179, H187, and N191; these read SLPN and CSFLK. Topologically, residues 163 to 185 are extracellular; the sequence is TNRRPRDKNVKKCSFLKSEFGLV. Residues 186–207 traverse the membrane as a helical segment; sequence WHEIVNYICQVIFWINFLIVIV. Residues 208-233 lie on the Cytoplasmic side of the membrane; that stretch reads CYTLITKELYRSYVRTRGVGKVPRKK. The helical transmembrane segment at 234 to 259 threads the bilayer; it reads VNVKVFIIIAVFFICFVPFHFARIPY. ADP contacts are provided by residues 256–259, Q263, and K280; that span reads RIPY. Residues 260-278 lie on the Extracellular side of the membrane; that stretch reads TLSQTRDVFDCAAENTLFY. A helical membrane pass occupies residues 279-298; that stretch reads VKESTLWLTSLNACLDPFIY. Over 299–342 the chain is Cytoplasmic; sequence FFLCKSFRNSLISMLKCPNSATSQSQDNRKKEQDGGDPNEETPM. The disordered stretch occupies residues 317–342; sequence NSATSQSQDNRKKEQDGGDPNEETPM. Residues 333 to 342 show a composition bias toward acidic residues; the sequence is GGDPNEETPM.

Belongs to the G-protein coupled receptor 1 family.

Its subcellular location is the cell membrane. In terms of biological role, receptor for ADP and ATP coupled to G-proteins that inhibit the adenylyl cyclase second messenger system. Required for normal platelet aggregation and blood coagulation. This Macaca fascicularis (Crab-eating macaque) protein is P2Y purinoceptor 12 (P2RY12).